A 354-amino-acid polypeptide reads, in one-letter code: Arginase-2, mitochondrial (354 aa).

A mitochondrion-targeting transit peptide spans methionine 1–serine 22. Mn(2+) contacts are provided by histidine 120, aspartate 143, histidine 145, and aspartate 147. Substrate is bound by residues histidine 145–asparagine 149, serine 156–asparagine 158, and glutamate 202. Positions 251 and 253 each coordinate Mn(2+). Residues threonine 265 and glutamate 296 each contribute to the substrate site.

Belongs to the arginase family. Homotrimer. Mn(2+) is required as a cofactor.

It localises to the mitochondrion. It catalyses the reaction L-arginine + H2O = urea + L-ornithine. Its pathway is nitrogen metabolism; urea cycle; L-ornithine and urea from L-arginine: step 1/1. Its function is as follows. May play a role in the regulation of extra-urea cycle arginine metabolism and also in down-regulation of nitric oxide synthesis. Extrahepatic arginase functions to regulate L-arginine bioavailability to nitric oxid synthase (NOS). Arginine metabolism is a critical regulator of innate and adaptive immune responses. Seems to be involved in negative regulation of the survival capacity of activated T cells. May suppress inflammation-related signaling in asthmatic airway epithelium. May play a role in promoting prenatal immune suppression. Regulates RPS6KB1 signaling, which promotes endothelial cell senescence and inflammation and implicates NOS3/eNOS dysfunction. Can inhibit endothelial autophagy independently of its enzymatic activity implicating mTORC2 signaling. Involved in vascular smooth muscle cell senescence and apoptosis independently of its enzymatic activity. In Rattus norvegicus (Rat), this protein is Arginase-2, mitochondrial (Arg2).